Here is a 31-residue protein sequence, read N- to C-terminus: Potassium channel toxin alpha-KTx 19.2 (31 aa).

Cystine bridges form between Cys-3–Cys-22, Cys-8–Cys-27, and Cys-12–Cys-29.

The protein belongs to the short scorpion toxin superfamily. Potassium channel inhibitor family. Alpha-KTx 19 subfamily. Monomer. As to expression, expressed by the venom gland.

Its subcellular location is the secreted. Its function is as follows. Blocks voltage-gated potassium channels rKv1.1/KCNA1, rKv1.2/KCNA2, hKv1.3/KCNA3, rKv1.6/KCNA6 (IC(50)=75.9 nM) and, to a lesser extent, Shaker IR (with the inactivation domain removed). This chain is Potassium channel toxin alpha-KTx 19.2, found in Buthus occitanus tunetanus (Common European scorpion).